The chain runs to 106 residues: uncharacterized protein (106 aa).

A run of 3 helical transmembrane segments spans residues 4–24 (LPVVIISIVLFFVLFFGIGFL), 27–47 (MLLRMSWIMAVIYPIVCLFII), and 78–98 (VLILVSGLAGAIVSGIAINML).

It localises to the cell membrane. This is an uncharacterized protein from Bacillus subtilis (strain 168).